The following is a 345-amino-acid chain: MATAMDTGAGASAPAVPQGDRTSADYYFDSYSHFGIHEEMLKDSVRTRTYMNAILNNAYLFKDKIVLDIGCGTGILSLFSAKAGAKHVYGIECSTIAEQATQIVKDNKFDDRVTIIKGKVEEVTLPVDKVDIIISEWMGYFLFYESMLDTVIYARDKWLVPGGIIMPDKATLSLCAIEDGEYKHDKIEFWDNVYGFNMSCIKQLAIAEPLVDIVEPDQIASTIQTVVSVDISTMKKEDATFTVPYELTMTRNDYVHALVGFFDVSFTRGHKPLSFTTSPRARATHWKQTVFYLEDTLMASKDETISGKLECKPNAKNPRDLDISIAYEFEGERGQVKNTQQYRMR.

Positions 24 to 345 (ADYYFDSYSH…VKNTQQYRMR (322 aa)) constitute an SAM-dependent MTase PRMT-type domain. Positions 37, 46, 70, 92, and 121 each coordinate S-adenosyl-L-methionine. Active-site residues include Glu136 and Glu145.

The protein belongs to the class I-like SAM-binding methyltransferase superfamily. Protein arginine N-methyltransferase family. Post-translationally, phosphorylated during flagellum resorption.

Its subcellular location is the nucleus. It localises to the cell projection. The protein localises to the cilium. It is found in the flagellum. It catalyses the reaction L-arginyl-[protein] + S-adenosyl-L-methionine = N(omega)-methyl-L-arginyl-[protein] + S-adenosyl-L-homocysteine + H(+). The enzyme catalyses L-arginyl-[protein] + 2 S-adenosyl-L-methionine = N(omega),N(omega)-dimethyl-L-arginyl-[protein] + 2 S-adenosyl-L-homocysteine + 2 H(+). Arginine methyltransferase that methylates (mono and asymmetric dimethylation) the guanidino nitrogens of arginyl residues present in target proteins. Mediates asymmetric dimethylation of components of the axoneme during flagellum resorption, such as CCDC40/FAP172, CCDC65/FAP250, RSP1, RSP2, RPS5, RSP6, and tektin. The polypeptide is Protein arginine N-methyltransferase 1 (PRMT1) (Chlamydomonas reinhardtii (Chlamydomonas smithii)).